Consider the following 739-residue polypeptide: Phosphoribosylformylglycinamidine synthase subunit PurL (739 aa).

Histidine 54 is an active-site residue. Positions 57 and 96 each coordinate ATP. Glutamate 98 contributes to the Mg(2+) binding site. Residues 99–102 (SHNH) and arginine 121 each bind substrate. Catalysis depends on histidine 100, which acts as the Proton acceptor. Aspartate 122 is a binding site for Mg(2+). Glutamine 245 provides a ligand contact to substrate. Aspartate 273 is a Mg(2+) binding site. 317 to 319 (ESQ) lines the substrate pocket. 2 residues coordinate ATP: aspartate 500 and glycine 537. Asparagine 538 is a binding site for Mg(2+). Residue serine 540 participates in substrate binding.

The protein belongs to the FGAMS family. Monomer. Part of the FGAM synthase complex composed of 1 PurL, 1 PurQ and 2 PurS subunits.

The protein localises to the cytoplasm. It carries out the reaction N(2)-formyl-N(1)-(5-phospho-beta-D-ribosyl)glycinamide + L-glutamine + ATP + H2O = 2-formamido-N(1)-(5-O-phospho-beta-D-ribosyl)acetamidine + L-glutamate + ADP + phosphate + H(+). Its pathway is purine metabolism; IMP biosynthesis via de novo pathway; 5-amino-1-(5-phospho-D-ribosyl)imidazole from N(2)-formyl-N(1)-(5-phospho-D-ribosyl)glycinamide: step 1/2. Part of the phosphoribosylformylglycinamidine synthase complex involved in the purines biosynthetic pathway. Catalyzes the ATP-dependent conversion of formylglycinamide ribonucleotide (FGAR) and glutamine to yield formylglycinamidine ribonucleotide (FGAM) and glutamate. The FGAM synthase complex is composed of three subunits. PurQ produces an ammonia molecule by converting glutamine to glutamate. PurL transfers the ammonia molecule to FGAR to form FGAM in an ATP-dependent manner. PurS interacts with PurQ and PurL and is thought to assist in the transfer of the ammonia molecule from PurQ to PurL. The sequence is that of Phosphoribosylformylglycinamidine synthase subunit PurL from Bacillus cereus (strain B4264).